An 811-amino-acid polypeptide reads, in one-letter code: Probable potassium transporter 16 (811 aa).

Over M1–R66 the chain is Cytoplasmic. Residues L67 to Y87 traverse the membrane as a helical segment. Residues Q88–D100 lie on the Extracellular side of the membrane. The chain crosses the membrane as a helical span at residues I101–V121. The Cytoplasmic portion of the chain corresponds to F122–K190. A helical membrane pass occupies residues I191 to N211. Residues P212–P228 are Extracellular-facing. Residues H229 to V249 traverse the membrane as a helical segment. Residues Q250–K256 are Cytoplasmic-facing. A helical membrane pass occupies residues I257–I277. Over Y278 to Q310 the chain is Extracellular. A helical membrane pass occupies residues L311–F331. The Cytoplasmic segment spans residues S332–Q337. A helical membrane pass occupies residues L338 to Y358. Residues L359–P379 lie on the Extracellular side of the membrane. Residues L380–V400 form a helical membrane-spanning segment. The Cytoplasmic portion of the chain corresponds to S401–N438. A helical transmembrane segment spans residues F439–V459. Topologically, residues K460–E463 are extracellular. A helical transmembrane segment spans residues I464 to V484. Over W485–N488 the chain is Cytoplasmic. The chain crosses the membrane as a helical span at residues I489–A509. Residues V510–Y519 are Extracellular-facing. A helical transmembrane segment spans residues M520–V540. The Cytoplasmic portion of the chain corresponds to K541–I811.

This sequence belongs to the HAK/KUP transporter (TC 2.A.72.3) family.

It is found in the membrane. Its function is as follows. High-affinity potassium transporter. This is Probable potassium transporter 16 (HAK16) from Oryza sativa subsp. japonica (Rice).